A 362-amino-acid chain; its full sequence is Aminomethyltransferase (362 aa).

This sequence belongs to the GcvT family. In terms of assembly, the glycine cleavage system is composed of four proteins: P, T, L and H.

The catalysed reaction is N(6)-[(R)-S(8)-aminomethyldihydrolipoyl]-L-lysyl-[protein] + (6S)-5,6,7,8-tetrahydrofolate = N(6)-[(R)-dihydrolipoyl]-L-lysyl-[protein] + (6R)-5,10-methylene-5,6,7,8-tetrahydrofolate + NH4(+). In terms of biological role, the glycine cleavage system catalyzes the degradation of glycine. The polypeptide is Aminomethyltransferase (Listeria innocua serovar 6a (strain ATCC BAA-680 / CLIP 11262)).